The primary structure comprises 1087 residues: Platelet-derived growth factor receptor alpha (1087 aa).

An N-terminal signal peptide occupies residues 1–23 (MGTPPRTFLILGCFLTGPLLTLC). The Extracellular segment spans residues 24-528 (QLPLPTIVPN…PTLRSELTVA (505 aa)). Ig-like C2-type domains lie at 26 to 104 (PLPT…YNHT), 116 to 208 (IYIY…IYIL), 213 to 312 (QLPV…VHDK), 314 to 411 (FIHL…SLLI), and 414 to 517 (PALI…LKLV). N-linked (GlcNAc...) asparagine glycosylation is found at Asn44, Asn75, Asn88, and Asn102. Cys49 and Cys99 are joined by a disulfide. Intrachain disulfides connect Cys149/Cys189 and Cys235/Cys290. Residues Asn353, Asn359, Asn458, and Asn468 are each glycosylated (N-linked (GlcNAc...) asparagine). A disulfide bridge links Cys435 with Cys501. Residues 529 to 549 (AAVLVLLVIVIISLIVLVIIW) form a helical membrane-spanning segment. At 550-1087 (KQKPRYEIRW…SSDLVEDSFL (538 aa)) the chain is on the cytoplasmic side. Phosphotyrosine; by autocatalysis is present on residues Tyr572 and Tyr574. One can recognise a Protein kinase domain in the interval 593–954 (LVLGRILGSG…HLSEIVESLL (362 aa)). Residues 599 to 607 (LGSGAFGKV) and Lys627 each bind ATP. 6 positions are modified to phosphotyrosine; by autocatalysis: Tyr720, Tyr731, Tyr742, Tyr754, Tyr762, and Tyr768. The Proton acceptor role is filled by Asp818. Residues Tyr849 and Tyr988 each carry the phosphotyrosine; by autocatalysis modification. A compositionally biased stretch (basic and acidic residues) spans 1000–1011 (KDRESGFDEQRL). A disordered region spans residues 1000-1059 (KDRESGFDEQRLSADSGYITPLPDIDPVSEDELGKRNRHSSQTSEESAIETGSSSSTFIK). Tyr1017 bears the Phosphotyrosine; by autocatalysis mark. Polar residues predominate over residues 1039–1057 (SSQTSEESAIETGSSSSTF).

This sequence belongs to the protein kinase superfamily. Tyr protein kinase family. CSF-1/PDGF receptor subfamily. In terms of assembly, interacts with homodimeric PDGFA, PDGFB and PDGFC, and with heterodimers formed by PDGFA and PDGFB. Monomer in the absence of bound ligand. Interaction with dimeric PDGFA, PDGFB and/or PDGFC leads to receptor dimerization, where both PDGFRA homodimers and heterodimers with PDGFRB are observed. Post-translationally, ubiquitinated, leading to its internalization and degradation. Autophosphorylated on tyrosine residues upon ligand binding. Autophosphorylation occurs in trans, i.e. one subunit of the dimeric receptor phosphorylates tyrosine residues on the other subunit.

Its subcellular location is the cell membrane. It localises to the cell projection. It is found in the cilium. The protein localises to the golgi apparatus. The catalysed reaction is L-tyrosyl-[protein] + ATP = O-phospho-L-tyrosyl-[protein] + ADP + H(+). Its activity is regulated as follows. Present in an inactive conformation in the absence of bound ligand. Binding of PDGFA and/or PDGFB leads to dimerization and activation by autophosphorylation on tyrosine residues. Functionally, tyrosine-protein kinase that acts as a cell-surface receptor for PDGFA, PDGFB and PDGFC and plays an essential role in the regulation of embryonic development, cell proliferation, survival and chemotaxis. Depending on the context, promotes or inhibits cell proliferation and cell migration. Plays an important role in the differentiation of bone marrow-derived mesenchymal stem cells. Required for normal skeleton development. Required for normal development of the gastrointestinal tract. Plays a role in cell migration and chemotaxis in wound healing. Plays a role in platelet activation, secretion of agonists from platelet granules, and in thrombin-induced platelet aggregation. Binding of its cognate ligands - homodimeric PDGFA, homodimeric PDGFB, heterodimers formed by PDGFA and PDGFB or homodimeric PDGFC -leads to the activation of several signaling cascades; the response depends on the nature of the bound ligand and is modulated by the formation of heterodimers between PDGFRA and PDGFRB. Phosphorylates PIK3R1, PLCG1, and PTPN11. Activation of PLCG1 leads to the production of the cellular signaling molecules diacylglycerol and inositol 1,4,5-trisphosphate, mobilization of cytosolic Ca(2+) and the activation of protein kinase C. Phosphorylates PIK3R1, the regulatory subunit of phosphatidylinositol 3-kinase, and thereby mediates activation of the AKT1 signaling pathway. Mediates activation of HRAS and of the MAP kinases MAPK1/ERK2 and/or MAPK3/ERK1. Promotes activation of STAT family members STAT1, STAT3 and STAT5A and/or STAT5B. Receptor signaling is down-regulated by protein phosphatases that dephosphorylate the receptor and its down-stream effectors, and by rapid internalization of the activated receptor. The polypeptide is Platelet-derived growth factor receptor alpha (PDGFRA) (Gallus gallus (Chicken)).